A 550-amino-acid polypeptide reads, in one-letter code: Dihydroxy-acid dehydratase (550 aa).

Aspartate 78 lines the Mg(2+) pocket. Cysteine 119 lines the [2Fe-2S] cluster pocket. Mg(2+) is bound by residues aspartate 120 and lysine 121. Lysine 121 carries the post-translational modification N6-carboxylysine. A [2Fe-2S] cluster-binding site is contributed by cysteine 191. Glutamate 440 provides a ligand contact to Mg(2+). Serine 466 functions as the Proton acceptor in the catalytic mechanism.

Belongs to the IlvD/Edd family. As to quaternary structure, homodimer. [2Fe-2S] cluster is required as a cofactor. It depends on Mg(2+) as a cofactor.

It catalyses the reaction (2R)-2,3-dihydroxy-3-methylbutanoate = 3-methyl-2-oxobutanoate + H2O. It carries out the reaction (2R,3R)-2,3-dihydroxy-3-methylpentanoate = (S)-3-methyl-2-oxopentanoate + H2O. It functions in the pathway amino-acid biosynthesis; L-isoleucine biosynthesis; L-isoleucine from 2-oxobutanoate: step 3/4. It participates in amino-acid biosynthesis; L-valine biosynthesis; L-valine from pyruvate: step 3/4. Functions in the biosynthesis of branched-chain amino acids. Catalyzes the dehydration of (2R,3R)-2,3-dihydroxy-3-methylpentanoate (2,3-dihydroxy-3-methylvalerate) into 2-oxo-3-methylpentanoate (2-oxo-3-methylvalerate) and of (2R)-2,3-dihydroxy-3-methylbutanoate (2,3-dihydroxyisovalerate) into 2-oxo-3-methylbutanoate (2-oxoisovalerate), the penultimate precursor to L-isoleucine and L-valine, respectively. In Methanococcus vannielii (strain ATCC 35089 / DSM 1224 / JCM 13029 / OCM 148 / SB), this protein is Dihydroxy-acid dehydratase.